The following is a 155-amino-acid chain: DNA-directed RNA polymerase II subunit rpb4 (155 aa).

This sequence belongs to the eukaryotic RPB4 RNA polymerase subunit family. As to quaternary structure, component of the RNA polymerase II (Pol II) complex consisting of 12 subunits. RPB4 and RPB7 form a subcomplex that protrudes from the 10-subunit Pol II core complex.

Its subcellular location is the nucleus. Its function is as follows. DNA-dependent RNA polymerase catalyzes the transcription of DNA into RNA using the four ribonucleoside triphosphates as substrates. Component of RNA polymerase II which synthesizes mRNA precursors and many functional non-coding RNAs. Pol II is the central component of the basal RNA polymerase II transcription machinery. It is composed of mobile elements that move relative to each other. RPB4 is part of a subcomplex with RPB7 that binds to a pocket formed by RPB1, RPB2 and RPB6 at the base of the clamp element. The RPB4-RPB7 subcomplex seems to lock the clamp via RPB7 in the closed conformation thus preventing double-stranded DNA to enter the active site cleft. The RPB4-RPB7 subcomplex binds single-stranded DNA and RNA. This Dictyostelium discoideum (Social amoeba) protein is DNA-directed RNA polymerase II subunit rpb4 (polr2d).